We begin with the raw amino-acid sequence, 579 residues long: Protein alan shepard (579 aa).

Positions M1–Q12 are enriched in pro residues. The disordered stretch occupies residues M1–P66. Position 5 is a phosphotyrosine (Y5). Low complexity predominate over residues Q13–Q24. Residues Q25–M35 are compositionally biased toward gly residues. The segment covering G37–Y54 has biased composition (polar residues). Low complexity predominate over residues S55 to P66. A phosphotyrosine mark is found at Y125 and Y142. The segment at P164–G225 is disordered. A compositionally biased stretch (low complexity) spans S178–G225. RRM domains lie at T231–Q304 and T310–G389. Residues M553–K579 form a disordered region.

Functionally, has a role in the perception of gravity. The protein is Protein alan shepard of Drosophila sechellia (Fruit fly).